A 1338-amino-acid chain; its full sequence is Phosphoribosylformylglycinamidine synthase (1338 aa).

A Phosphoserine modification is found at serine 215. ATP-binding positions include 322-333 (GATTGTGGRIRD) and 402-404 (AGF). Phosphoserine is present on serine 569. Threonine 619 and threonine 623 each carry phosphothreonine. ATP is bound at residue alanine 706. Mg(2+) is bound by residues aspartate 707, glutamate 746, asparagine 750, and aspartate 909. Serine 911 lines the ATP pocket. The Glutamine amidotransferase type-1 domain occupies 1064-1302 (RVAILREEGS…AVMPHPERAV (239 aa)). Cysteine 1158 functions as the Nucleophile in the catalytic mechanism. Residues histidine 1297 and glutamate 1299 contribute to the active site.

In the N-terminal section; belongs to the FGAMS family.

It localises to the cytoplasm. The enzyme catalyses N(2)-formyl-N(1)-(5-phospho-beta-D-ribosyl)glycinamide + L-glutamine + ATP + H2O = 2-formamido-N(1)-(5-O-phospho-beta-D-ribosyl)acetamidine + L-glutamate + ADP + phosphate + H(+). It functions in the pathway purine metabolism; IMP biosynthesis via de novo pathway; 5-amino-1-(5-phospho-D-ribosyl)imidazole from N(2)-formyl-N(1)-(5-phospho-D-ribosyl)glycinamide: step 1/2. Functionally, phosphoribosylformylglycinamidine synthase involved in the purines biosynthetic pathway. Catalyzes the ATP-dependent conversion of formylglycinamide ribonucleotide (FGAR) and glutamine to yield formylglycinamidine ribonucleotide (FGAM) and glutamate. This Homo sapiens (Human) protein is Phosphoribosylformylglycinamidine synthase (PFAS).